We begin with the raw amino-acid sequence, 333 residues long: Calcium uniporter protein, mitochondrial (333 aa).

The transit peptide at 1 to 22 (MRNGRCLVTPFVTAQRLANLRN) directs the protein to the mitochondrion. The Mitochondrial matrix segment spans residues 23 to 214 (TLWNRQQIAF…QECEAHTDRV (192 aa)). Residues 180 to 193 (KKLLLQLENAETLL) adopt a coiled-coil conformation. Residues 195–213 (PLHDAKRKIEQECEAHTDR) form an outer juxtamembrane helix (OJMH) region. A helical transmembrane segment spans residues 215–234 (MWAGFAAMGVQTGLFARLTW). Topologically, residues 235-243 (WEYSWDIME) are mitochondrial intermembrane. The Selectivity filter motif lies at 239–247 (WDIMEPVTY). E243 contributes to the Ca(2+) binding site. A helical membrane pass occupies residues 244–260 (PVTYFATYSTVCATFGY). The Mitochondrial matrix segment spans residues 261 to 333 (YLYTQQSFEY…SYLSNLEAEK (73 aa)). The segment at 262–271 (LYTQQSFEYP) is inner juxtamembrane helix (IJMH). Residues 289–316 (QNFDIEKYNRLVTEVDELRNQLKRMRDP) adopt a coiled-coil conformation.

Belongs to the MCU (TC 1.A.77) family.

Its subcellular location is the mitochondrion inner membrane. It carries out the reaction Ca(2+)(in) = Ca(2+)(out). Its activity is regulated as follows. Inhibited by ruthenium red or its derivative Ru360; possibly by obstructing the pore. In terms of biological role, mitochondrial inner membrane calcium uniporter that mediates calcium uptake into mitochondria. Constitutes a pore-forming and calcium-conducting subunit. Mitochondrial calcium homeostasis plays key roles in cellular physiology and regulates cell bioenergetics, cytoplasmic calcium signals and activation of cell death pathways. Required for rapid mitochondrial calcium uptake and mitochondrial reactive oxygen species (mtROS) production after wounding. In addition, together with mitochondrial calcium regulator micu-1, required for mitochondrial calcium uptake following axon injury in PLM touch receptor neurons. The polypeptide is Calcium uniporter protein, mitochondrial (Caenorhabditis elegans).